The following is a 158-amino-acid chain: Urease accessory protein UreE (158 aa).

Residues 133-158 (PEGGAYQAHSHDGHSHHQGHTHDHHD) are disordered. Over residues 141–158 (HSHDGHSHHQGHTHDHHD) the composition is skewed to basic and acidic residues.

Belongs to the UreE family.

The protein resides in the cytoplasm. Its function is as follows. Involved in urease metallocenter assembly. Binds nickel. Probably functions as a nickel donor during metallocenter assembly. The polypeptide is Urease accessory protein UreE (Chelativorans sp. (strain BNC1)).